The following is a 520-amino-acid chain: Sterile alpha motif domain-containing protein 3 (520 aa).

Residues 4-71 enclose the SAM domain; the sequence is WSVEQVCSWL…KYKQNTQGLK (68 aa). Residues 85 to 114 are disordered; the sequence is TEAARDYRDEESSSPARHGEQMPSFYPAEN.

The polypeptide is Sterile alpha motif domain-containing protein 3 (SAMD3) (Homo sapiens (Human)).